The primary structure comprises 142 residues: Ribosome-binding factor A (142 aa).

Residues 119-142 (EAKQKQHGVETDAEQGETKDEGDK) form a disordered region.

It belongs to the RbfA family. Monomer. Binds 30S ribosomal subunits, but not 50S ribosomal subunits or 70S ribosomes.

It localises to the cytoplasm. Functionally, one of several proteins that assist in the late maturation steps of the functional core of the 30S ribosomal subunit. Associates with free 30S ribosomal subunits (but not with 30S subunits that are part of 70S ribosomes or polysomes). Required for efficient processing of 16S rRNA. May interact with the 5'-terminal helix region of 16S rRNA. The sequence is that of Ribosome-binding factor A from Shewanella halifaxensis (strain HAW-EB4).